Reading from the N-terminus, the 271-residue chain is Formamidopyrimidine-DNA glycosylase (271 aa).

Catalysis depends on Pro-2, which acts as the Schiff-base intermediate with DNA. The active-site Proton donor is the Glu-3. Lys-58 (proton donor; for beta-elimination activity) is an active-site residue. DNA-binding residues include His-92, Arg-111, and Arg-152. The segment at 237–271 (SVYGREGEACKQCGRVLKHATIGQRATVWCGSCQR) adopts an FPG-type zinc-finger fold. The Proton donor; for delta-elimination activity role is filled by Arg-261.

Belongs to the FPG family. As to quaternary structure, monomer. Requires Zn(2+) as cofactor.

It carries out the reaction Hydrolysis of DNA containing ring-opened 7-methylguanine residues, releasing 2,6-diamino-4-hydroxy-5-(N-methyl)formamidopyrimidine.. It catalyses the reaction 2'-deoxyribonucleotide-(2'-deoxyribose 5'-phosphate)-2'-deoxyribonucleotide-DNA = a 3'-end 2'-deoxyribonucleotide-(2,3-dehydro-2,3-deoxyribose 5'-phosphate)-DNA + a 5'-end 5'-phospho-2'-deoxyribonucleoside-DNA + H(+). In terms of biological role, involved in base excision repair of DNA damaged by oxidation or by mutagenic agents. Acts as a DNA glycosylase that recognizes and removes damaged bases. Has a preference for oxidized purines, such as 7,8-dihydro-8-oxoguanine (8-oxoG). Has AP (apurinic/apyrimidinic) lyase activity and introduces nicks in the DNA strand. Cleaves the DNA backbone by beta-delta elimination to generate a single-strand break at the site of the removed base with both 3'- and 5'-phosphates. This Xanthomonas euvesicatoria pv. vesicatoria (strain 85-10) (Xanthomonas campestris pv. vesicatoria) protein is Formamidopyrimidine-DNA glycosylase.